A 91-amino-acid polypeptide reads, in one-letter code: Elongation factor 1-beta (91 aa).

This sequence belongs to the EF-1-beta/EF-1-delta family.

Its function is as follows. Promotes the exchange of GDP for GTP in EF-1-alpha/GDP, thus allowing the regeneration of EF-1-alpha/GTP that could then be used to form the ternary complex EF-1-alpha/GTP/AAtRNA. This chain is Elongation factor 1-beta, found in Thermococcus onnurineus (strain NA1).